We begin with the raw amino-acid sequence, 655 residues long: Polycyclic ketone monooxygenase (655 aa).

Gly89, Asp113, Ala114, Thr121, Trp124, Cys132, Asp133, Tyr139, and Val183 together coordinate FAD. Residues Thr277, Thr280, Thr301, Lys425, and Val452 each coordinate NADPH. Cys424 and Cys596 are joined by a disulfide. Thr492 and Asn541 together coordinate FAD. NADPH is bound at residue Tyr600.

It belongs to the FAD-binding monooxygenase family. FAD is required as a cofactor.

In terms of biological role, polycyclic ketone monooxygenase (PockeMO) that displays excellent enantioselectivity, acts on various ketones, and is particularly active on polycyclic molecules. Breaks C-C bonds through the insertion of a single oxygen atom adjacent to a carbonyl moiety, yielding esters or lactones from ketones. PockeMO is able to convert linear ketones (including cyclohexane and to a lesser extend 4-octanone), cyclic ketones (including cyclohexanone and cyclooctanone), bicyclic ketones and polycyclic ketones (steroids). Performs oxidation of the keto functionalities at both the A and D rings of steroids. Particularly, oxidizes the A ring of stanolone or pregnenolone. Selectively oxidizes the D ring of androstenedione or androstadienedione, steroids with keto groups in both the A and D rings, to yield the pharmaceutically relevant testo(lo)lactone. This is Polycyclic ketone monooxygenase from Thermothelomyces thermophilus (strain ATCC 42464 / BCRC 31852 / DSM 1799) (Sporotrichum thermophile).